Here is a 306-residue protein sequence, read N- to C-terminus: UDP-3-O-acyl-N-acetylglucosamine deacetylase (306 aa).

Zn(2+)-binding residues include His79, His238, and Asp242. His265 functions as the Proton donor in the catalytic mechanism.

This sequence belongs to the LpxC family. It depends on Zn(2+) as a cofactor.

The enzyme catalyses a UDP-3-O-[(3R)-3-hydroxyacyl]-N-acetyl-alpha-D-glucosamine + H2O = a UDP-3-O-[(3R)-3-hydroxyacyl]-alpha-D-glucosamine + acetate. It participates in glycolipid biosynthesis; lipid IV(A) biosynthesis; lipid IV(A) from (3R)-3-hydroxytetradecanoyl-[acyl-carrier-protein] and UDP-N-acetyl-alpha-D-glucosamine: step 2/6. Catalyzes the hydrolysis of UDP-3-O-myristoyl-N-acetylglucosamine to form UDP-3-O-myristoylglucosamine and acetate, the committed step in lipid A biosynthesis. This Shewanella frigidimarina (strain NCIMB 400) protein is UDP-3-O-acyl-N-acetylglucosamine deacetylase.